The following is a 311-amino-acid chain: Ketoisovalerate oxidoreductase subunit VorB (311 aa).

In terms of assembly, heterotetramer of one alpha, one beta, one delta and one gamma chain.

It carries out the reaction 3-methyl-2-oxobutanoate + 2 oxidized [2Fe-2S]-[ferredoxin] + CoA = 2-methylpropanoyl-CoA + 2 reduced [2Fe-2S]-[ferredoxin] + CO2 + H(+). This is Ketoisovalerate oxidoreductase subunit VorB (vorB) from Pyrococcus horikoshii (strain ATCC 700860 / DSM 12428 / JCM 9974 / NBRC 100139 / OT-3).